Reading from the N-terminus, the 636-residue chain is Autophagy-related protein 20 (636 aa).

2 disordered regions span residues 1–68 (MQIN…QPHE) and 84–163 (NYMQ…EGKK). Positions 10–23 (NSVTHLENNSPSRL) are enriched in polar residues. A compositionally biased stretch (basic and acidic residues) spans 27 to 49 (KTVEEHKEHEPDLQTQSEMRRES). Over residues 50–64 (NGSPKDTAVTNQNGD) the composition is skewed to polar residues. Basic residues predominate over residues 122-133 (NRRKNSKERRRS). The region spanning 160-305 (EGKKRAQILE…DFLDPNNKNW (146 aa)) is the PX domain. A 1,2-diacyl-sn-glycero-3-phospho-(1D-myo-inositol-3-phosphate) is bound by residues arginine 196, serine 198, lysine 222, and arginine 271.

The protein belongs to the sorting nexin family.

The protein resides in the endosome membrane. Its subcellular location is the preautophagosomal structure membrane. Its function is as follows. Required for cytoplasm to vacuole transport (Cvt), pexophagy and mitophagy. Also involved in endoplasmic reticulum-specific autophagic process and is essential for the survival of cells subjected to severe ER stress. Functions in protein retrieval from the endocytic pathway. The polypeptide is Autophagy-related protein 20 (ATG20) (Kluyveromyces lactis (strain ATCC 8585 / CBS 2359 / DSM 70799 / NBRC 1267 / NRRL Y-1140 / WM37) (Yeast)).